We begin with the raw amino-acid sequence, 47 residues long: Potassium channel toxin gamma-KTx 5.1 (47 aa).

Cystine bridges form between Cys-5/Cys-23, Cys-11/Cys-34, Cys-20/Cys-39, and Cys-24/Cys-41.

Belongs to the ergtoxin family. Gamma-KTx 5 subfamily. In terms of tissue distribution, expressed by the venom gland.

The protein localises to the secreted. Functionally, reversibly blocks Kv11/ERG potassium channels. The polypeptide is Potassium channel toxin gamma-KTx 5.1 (Centruroides sculpturatus (Arizona bark scorpion)).